Here is a 313-residue protein sequence, read N- to C-terminus: Putative adhesin P1-like protein MPN_202 (313 aa).

The segment covering methionine 1–asparagine 16 has biased composition (low complexity). Residues methionine 1–threonine 44 form a disordered region. Polar residues predominate over residues glycine 29–threonine 44.

Belongs to the adhesin P1 family.

In Mycoplasma pneumoniae (strain ATCC 29342 / M129 / Subtype 1) (Mycoplasmoides pneumoniae), this protein is Putative adhesin P1-like protein MPN_202.